The primary structure comprises 927 residues: Disks large homolog 1 (927 aa).

The L27 domain maps to 4–64 (RKQDTQRALH…FYEVTLLDNP (61 aa)). At Thr115 the chain carries Phosphothreonine. Residues Ser122, Ser138, and Ser158 each carry the phosphoserine modification. Residues 162-212 (PTEAVPPSSPTVPVIPVLPVPAENTVILPTIPQANPPPVLVNTDSLETSTY) are interaction with SH3 domains. Residues 224–546 (EITLERGNSG…QAVTIVAQYR (323 aa)) form a required for interaction with MARCHF2 region. 3 consecutive PDZ domains span residues 230–317 (GNSG…SEKI), 325–412 (GPKG…YMND), and 474–555 (TGLG…RFEA). The residue at position 232 (Ser232) is a Phosphoserine. A Phosphotyrosine modification is found at Tyr399. Residues Ser568, Ser573, Ser575, Ser579, Ser598, Ser619, Ser707, Ser710, and Ser857 each carry the phosphoserine modification. The SH3 domain occupies 581 to 651 (KRSLYVRALF…PSKRRVEKKE (71 aa)). The Guanylate kinase-like domain occupies 683–858 (RKFPFYKNKD…ISIFIKPKSM (176 aa)). Residues 691-719 (KDQSEQETSDADQHITSNASDSESSYRGQ) form a disordered region. Polar residues predominate over residues 704–717 (HITSNASDSESSYR).

Belongs to the MAGUK family. Homotetramer. Interacts (via guanylate kinase-like domain) with DLGAP1, DLGAP2, DLGAP3, DLGAP4 and MAP1A. Interacts (via guanylate kinase-like domain) with KIF13B. May interact with HTR2A. Interacts (via PDZ domains) with GRIA1. Interacts (via PDZ domains) with GRIN2A. Interacts (via PDZ domains) with KCND2 and KCND3. Interacts (via PDZ domains) with KCNA1, KCNA2, KCNA3 and KCNA4. Interacts (via PDZ domains) with ADGRA3. Interacts with KCNF1. Interacts with CAMK2. Interacts with cytoskeleton-associated protein EPB41. Interacts with cytoskeleton-associated protein EZR. Found in a complex with KCNA5 and CAV3. Found in a complex with APC and CTNNB1. Interacts (via PDZ domains) with APC. Interacts with CDH1 through binding to PIK3R1. Forms multiprotein complexes with CASK, LIN7A, LIN7B, LIN7C, APBA1, and KCNJ12. Interacts with TOPK. Forms a tripartite complex composed of DLG1, MPP7 and LIN7 (LIN7A or LIN7C). May interact with TJAP1. Interacts with PTEN. Interacts with FRMPD4 (via C-terminus). Interacts with LRFN1, LRFN2 and LRFN4. Interacts with SFPQ. Interacts (via PDZ domains) with ADGRA2 (via PDZ-binding motif). Interacts with ADAM10; this interaction recruits ADAM10 to the cell membrane during long-term depression in hippocampal neurons. Interacts with DGKI (via PDZ-binding motif). Interacts (via PDZ domains) with MARCHF2 (via PDZ domain); the interaction leads to DLG1 ubiqtuitination and degradation. Interacts (via N-terminus) with MPP3; this interaction connects CADM1 with DLG1 and links CADM1 with the regulatory subunit of phosphoinositide-3-kinase (PI3K) by forming a multiprotein complex and participates in cell spreading. In terms of processing, phosphorylated by MAPK12. Phosphorylation of Ser-232 regulates association with GRIN2A. Post-translationally, ubiquitinated; by MARCHF2 which results in its degradation.

The protein resides in the cell membrane. Its subcellular location is the basolateral cell membrane. It localises to the endoplasmic reticulum membrane. The protein localises to the postsynaptic density. It is found in the synapse. The protein resides in the sarcolemma. Its subcellular location is the apical cell membrane. It localises to the cell junction. The protein localises to the cytoplasm. Its function is as follows. Essential multidomain scaffolding protein required for normal development. Recruits channels, receptors and signaling molecules to discrete plasma membrane domains in polarized cells. Promotes epithelial cell layer barrier function via maintaining cell-cell adhesion. May also play a role in adherens junction assembly, signal transduction, cell proliferation, synaptogenesis and lymphocyte activation. Regulates the excitability of cardiac myocytes by modulating the functional expression of Kv4 channels. Functional regulator of Kv1.5 channel. During long-term depression in hippocampal neurons, it recruits ADAM10 to the plasma membrane. The chain is Disks large homolog 1 (DLG1) from Canis lupus familiaris (Dog).